We begin with the raw amino-acid sequence, 736 residues long: DNA topoisomerase 1 (736 aa).

In terms of domain architecture, Toprim spans 2 to 113 (KHLIIVESPA…SYPRIVFHEI (112 aa)). 2 residues coordinate Mg(2+): Glu-8 and Asp-82. Residues 129-552 (DMSKVNAQQA…DFYYPFMDKI (424 aa)) form the Topo IA-type catalytic domain. Positions 163–168 (SAGRVQ) are interaction with DNA. The O-(5'-phospho-DNA)-tyrosine intermediate role is filled by Tyr-297. 4 C4-type zinc fingers span residues 572–598 (CPKCGGELVKKNSRYGEFIACNNYPKC), 616–642 (CEKCGGEMVQKFSRNGAFLACNNYPEC), 663–689 (CPECGGDIALKRSKKGSFYGCNNYPKC), and 702–725 (CEKCHYLMSERIYRKKKAHECIKC).

The protein belongs to the type IA topoisomerase family. In terms of assembly, monomer. Requires Mg(2+) as cofactor.

It carries out the reaction ATP-independent breakage of single-stranded DNA, followed by passage and rejoining.. Functionally, releases the supercoiling and torsional tension of DNA, which is introduced during the DNA replication and transcription, by transiently cleaving and rejoining one strand of the DNA duplex. Introduces a single-strand break via transesterification at a target site in duplex DNA. The scissile phosphodiester is attacked by the catalytic tyrosine of the enzyme, resulting in the formation of a DNA-(5'-phosphotyrosyl)-enzyme intermediate and the expulsion of a 3'-OH DNA strand. The free DNA strand then undergoes passage around the unbroken strand, thus removing DNA supercoils. Finally, in the religation step, the DNA 3'-OH attacks the covalent intermediate to expel the active-site tyrosine and restore the DNA phosphodiester backbone. This is DNA topoisomerase 1 from Helicobacter pylori (strain ATCC 700392 / 26695) (Campylobacter pylori).